A 303-amino-acid chain; its full sequence is Ribosomal RNA small subunit methyltransferase A (303 aa).

Low complexity predominate over residues methionine 1–serine 19. The disordered stretch occupies residues methionine 1–leucine 34. The S-adenosyl-L-methionine site is built by histidine 55, leucine 57, glycine 82, glutamate 104, aspartate 130, and asparagine 149.

It belongs to the class I-like SAM-binding methyltransferase superfamily. rRNA adenine N(6)-methyltransferase family. RsmA subfamily.

The protein resides in the cytoplasm. The catalysed reaction is adenosine(1518)/adenosine(1519) in 16S rRNA + 4 S-adenosyl-L-methionine = N(6)-dimethyladenosine(1518)/N(6)-dimethyladenosine(1519) in 16S rRNA + 4 S-adenosyl-L-homocysteine + 4 H(+). In terms of biological role, specifically dimethylates two adjacent adenosines (A1518 and A1519) in the loop of a conserved hairpin near the 3'-end of 16S rRNA in the 30S particle. May play a critical role in biogenesis of 30S subunits. This is Ribosomal RNA small subunit methyltransferase A from Gluconobacter oxydans (strain 621H) (Gluconobacter suboxydans).